The sequence spans 357 residues: Methylthioribose-1-phosphate isomerase (357 aa).

Substrate-binding positions include 49–51 (RGA), Arg-89, and Gln-197. Catalysis depends on Asp-238, which acts as the Proton donor. 248-249 (NK) serves as a coordination point for substrate.

The protein belongs to the eIF-2B alpha/beta/delta subunits family. MtnA subfamily.

The enzyme catalyses 5-(methylsulfanyl)-alpha-D-ribose 1-phosphate = 5-(methylsulfanyl)-D-ribulose 1-phosphate. It participates in amino-acid biosynthesis; L-methionine biosynthesis via salvage pathway; L-methionine from S-methyl-5-thio-alpha-D-ribose 1-phosphate: step 1/6. Its function is as follows. Catalyzes the interconversion of methylthioribose-1-phosphate (MTR-1-P) into methylthioribulose-1-phosphate (MTRu-1-P). The sequence is that of Methylthioribose-1-phosphate isomerase from Leptospira biflexa serovar Patoc (strain Patoc 1 / Ames).